Reading from the N-terminus, the 528-residue chain is GMP synthase [glutamine-hydrolyzing] (528 aa).

Residues A13–D204 form the Glutamine amidotransferase type-1 domain. Catalysis depends on C90, which acts as the Nucleophile. Active-site residues include H178 and E180. The 199-residue stretch at W205–R403 folds into the GMPS ATP-PPase domain. S232 to S238 is an ATP binding site.

As to quaternary structure, homodimer.

The enzyme catalyses XMP + L-glutamine + ATP + H2O = GMP + L-glutamate + AMP + diphosphate + 2 H(+). It functions in the pathway purine metabolism; GMP biosynthesis; GMP from XMP (L-Gln route): step 1/1. Its function is as follows. Catalyzes the synthesis of GMP from XMP. This Prochlorococcus marinus (strain NATL1A) protein is GMP synthase [glutamine-hydrolyzing].